The primary structure comprises 702 residues: Elongation factor G (702 aa).

The tr-type G domain occupies 8 to 196 (ERYRNIGISA…MKAIIWDEAS (189 aa)). GTP contacts are provided by residues 17 to 24 (AHIDAGKT), 88 to 92 (DTPGH), and 142 to 145 (NKMD).

The protein belongs to the TRAFAC class translation factor GTPase superfamily. Classic translation factor GTPase family. EF-G/EF-2 subfamily.

The protein resides in the cytoplasm. Functionally, catalyzes the GTP-dependent ribosomal translocation step during translation elongation. During this step, the ribosome changes from the pre-translocational (PRE) to the post-translocational (POST) state as the newly formed A-site-bound peptidyl-tRNA and P-site-bound deacylated tRNA move to the P and E sites, respectively. Catalyzes the coordinated movement of the two tRNA molecules, the mRNA and conformational changes in the ribosome. This is Elongation factor G (fusA) from Thiomonas delicata (Thiomonas cuprina).